Reading from the N-terminus, the 899-residue chain is Protein translocase subunit SecA (899 aa).

Residues Gln-87, 105–109 (GEGKT), and Asp-516 contribute to the ATP site. Cys-884, Cys-886, Cys-895, and His-896 together coordinate Zn(2+).

This sequence belongs to the SecA family. Monomer and homodimer. Part of the essential Sec protein translocation apparatus which comprises SecA, SecYEG and auxiliary proteins SecDF. Other proteins may also be involved. Requires Zn(2+) as cofactor.

The protein resides in the cell inner membrane. Its subcellular location is the cytoplasm. It catalyses the reaction ATP + H2O + cellular proteinSide 1 = ADP + phosphate + cellular proteinSide 2.. In terms of biological role, part of the Sec protein translocase complex. Interacts with the SecYEG preprotein conducting channel. Has a central role in coupling the hydrolysis of ATP to the transfer of proteins into and across the cell membrane, serving as an ATP-driven molecular motor driving the stepwise translocation of polypeptide chains across the membrane. This is Protein translocase subunit SecA from Borreliella burgdorferi (strain ZS7) (Borrelia burgdorferi).